We begin with the raw amino-acid sequence, 451 residues long: Cytosolic Fe-S cluster assembly factor NAR1 (451 aa).

[4Fe-4S] cluster contacts are provided by Cys-20, Cys-56, Cys-59, Cys-62, Cys-166, Cys-213, Cys-382, and Cys-386.

This sequence belongs to the NARF family.

Component of the cytosolic Fe/S protein assembly machinery. Required for maturation of extramitochondrial Fe/S proteins. May play a role in the transfer of pre-assembled Fe/S clusters to target apoproteins. The sequence is that of Cytosolic Fe-S cluster assembly factor NAR1 (NAR1) from Eremothecium gossypii (strain ATCC 10895 / CBS 109.51 / FGSC 9923 / NRRL Y-1056) (Yeast).